The sequence spans 338 residues: 3-dehydroquinate synthase (338 aa).

It belongs to the archaeal-type DHQ synthase family.

It catalyses the reaction 2-amino-2,3,7-trideoxy-D-lyxo-hept-6-ulosonate + NAD(+) + H2O = 3-dehydroquinate + NH4(+) + NADH + H(+). Functionally, catalyzes the oxidative deamination and cyclization of 2-amino-3,7-dideoxy-D-threo-hept-6-ulosonic acid (ADH) to yield 3-dehydroquinate (DHQ), which is fed into the canonical shikimic pathway of aromatic amino acid biosynthesis. This is 3-dehydroquinate synthase from Cenarchaeum symbiosum (strain A).